The sequence spans 161 residues: Inner membrane assembly complex subunit 17 (161 aa).

The N-terminal 22 residues, 1–22 (MLNPRPCVPRLLSAVARCHKPY), are a transit peptide targeting the mitochondrion. Residues 23–84 (STSIKSLEDL…QQQQQALKKF (62 aa)) lie on the Mitochondrial matrix side of the membrane. Residues 85–107 (VRPMWIFLLMSSFFYLTGHYIWW) form a helical membrane-spanning segment. Residues 108 to 161 (KLEYDEREIELHKQVQALRQELDSAIAAKHSGKEPALSGAGAKKPKRWYLAWLW) lie on the Mitochondrial intermembrane side of the membrane. Residues 109–138 (LEYDEREIELHKQVQALRQELDSAIAAKHS) adopt a coiled-coil conformation.

Belongs to the INA17 family. Component of the inner membrane assembly (INA) complex, composed of INA17 and INA22. Interacts with a subset of F(1)F(0)-ATP synthase subunits of the F(1)-domain and the peripheral stalk.

Its subcellular location is the mitochondrion inner membrane. Its function is as follows. Component of the INA complex (INAC) that promotes the biogenesis of mitochondrial F(1)F(0)-ATP synthase. INAC facilitates the assembly of the peripheral stalk and promotes the assembly of the catalytic F(1)-domain with the membrane-embedded F(0)-domain. The polypeptide is Inner membrane assembly complex subunit 17 (Lachancea thermotolerans (strain ATCC 56472 / CBS 6340 / NRRL Y-8284) (Yeast)).